The following is a 313-amino-acid chain: Olfactory receptor 4M2 (313 aa).

At 1–25 (METANYTKVTEFVLTGLSQTPEVQL) the chain is on the cytoplasmic side. The chain crosses the membrane as a helical span at residues 26–46 (VLFVIFLSFYLFILPGNILII). Residues 47 to 57 (CTISLDPHLTS) are Extracellular-facing. The helical transmembrane segment at 58–78 (PMYFLLANLAFLDIWYSSITA) threads the bilayer. Topologically, residues 79–97 (PEMLIDFFVERKIISFDEC) are cytoplasmic. An intrachain disulfide couples cysteine 97 to cysteine 179. The chain crosses the membrane as a helical span at residues 98 to 118 (IAQLFFLHFAGASEMFLLTVM). Topologically, residues 119-142 (AFDLYTAICRPLHYATIMNQRLCC) are extracellular. The chain crosses the membrane as a helical span at residues 143-163 (ILVALSWRGGFIHSIIQVALI). Over 164 to 204 (VRLPFCGPNELDSYFCDITQVVRIACANTFPEELVMICSSG) the chain is Cytoplasmic. The helical transmembrane segment at 205–225 (LISVVCLIALLMSYAFLLALL) threads the bilayer. Topologically, residues 226–238 (KKLSGSGENTNRA) are extracellular. A helical transmembrane segment spans residues 239–259 (VSTCYSHITIVVLMFGPSIYI). At 260–270 (YARPFDSFSLD) the chain is on the cytoplasmic side. The helical transmembrane segment at 271–291 (KVVSVFNTLIFPLHNPIIYTL) threads the bilayer. The Extracellular portion of the chain corresponds to 292-313 (RNKEVKAAMRKLVTKYILCKEK).

It belongs to the G-protein coupled receptor 1 family.

Its subcellular location is the membrane. Functionally, odorant receptor. The sequence is that of Olfactory receptor 4M2 from Homo sapiens (Human).